A 367-amino-acid polypeptide reads, in one-letter code: Peptide chain release factor 2 (367 aa).

Gln-250 bears the N5-methylglutamine mark.

This sequence belongs to the prokaryotic/mitochondrial release factor family. In terms of processing, methylated by PrmC. Methylation increases the termination efficiency of RF2.

Its subcellular location is the cytoplasm. In terms of biological role, peptide chain release factor 2 directs the termination of translation in response to the peptide chain termination codons UGA and UAA. The polypeptide is Peptide chain release factor 2 (Mycobacteroides abscessus (strain ATCC 19977 / DSM 44196 / CCUG 20993 / CIP 104536 / JCM 13569 / NCTC 13031 / TMC 1543 / L948) (Mycobacterium abscessus)).